Consider the following 243-residue polypeptide: DNA repair protein RecO (243 aa).

It belongs to the RecO family.

Functionally, involved in DNA repair and RecF pathway recombination. This Geobacter sulfurreducens (strain ATCC 51573 / DSM 12127 / PCA) protein is DNA repair protein RecO.